A 90-amino-acid chain; its full sequence is Probable Fe(2+)-trafficking protein (90 aa).

This sequence belongs to the Fe(2+)-trafficking protein family.

Could be a mediator in iron transactions between iron acquisition and iron-requiring processes, such as synthesis and/or repair of Fe-S clusters in biosynthetic enzymes. This is Probable Fe(2+)-trafficking protein from Pseudomonas fluorescens (strain ATCC BAA-477 / NRRL B-23932 / Pf-5).